The sequence spans 186 residues: Glutathione-independent glyoxalase DJR-1.2 (186 aa).

Residues E20, C105, and H124 contribute to the active site.

It belongs to the peptidase C56 family. DJ-1 subfamily. As to expression, expressed in various tissues, including pharyngeal muscles, pharynx-intestinal valve, ventral nerve cord, spermatheca, rectal gland, inner labial (IL) cells of head neurons, phasmid (PHA/PHB) neurons in tail and supporting sheath/socket cells, as well as in head mesodermal cells (HMC), excretory canals and coelomocytes.

The protein resides in the cytoplasm. It carries out the reaction methylglyoxal + H2O = (R)-lactate + H(+). In terms of biological role, catalyzes the conversion of methylglyoxal (MG) or glyoxal (GO) to D-lactate or glycolic acid respectively in a single glutathione (GSH)-independent step. May play a role in detoxifying endogenously produced glyoxals. Involved in protection against glyoxal-induced cell death. Protects dopaminergic neurons from glyoxal-dependent neuronal degeneration. The chain is Glutathione-independent glyoxalase DJR-1.2 from Caenorhabditis elegans.